The chain runs to 218 residues: Ribose-5-phosphate isomerase A (218 aa).

Substrate is bound by residues 28-31 (TGST), 81-84 (DGAD), and 94-97 (KGGG). Glu103 functions as the Proton acceptor in the catalytic mechanism. Lys121 lines the substrate pocket.

Belongs to the ribose 5-phosphate isomerase family. Homodimer.

It carries out the reaction aldehydo-D-ribose 5-phosphate = D-ribulose 5-phosphate. The protein operates within carbohydrate degradation; pentose phosphate pathway; D-ribose 5-phosphate from D-ribulose 5-phosphate (non-oxidative stage): step 1/1. Functionally, catalyzes the reversible conversion of ribose-5-phosphate to ribulose 5-phosphate. This Vibrio campbellii (strain ATCC BAA-1116) protein is Ribose-5-phosphate isomerase A.